The chain runs to 165 residues: Lipoprotein signal peptidase (165 aa).

The next 3 membrane-spanning stretches (helical) occupy residues 9–29, 69–89, and 98–118; these read FLAI…VLLY, KYFL…FLFL, and IRFS…DILF. Active-site residues include Asp-124 and Asp-142. Residues 133–153 traverse the membrane as a helical segment; sequence WYFPTFNFADIFISLGTFIFV.

The protein belongs to the peptidase A8 family.

The protein localises to the cell inner membrane. The enzyme catalyses Release of signal peptides from bacterial membrane prolipoproteins. Hydrolyzes -Xaa-Yaa-Zaa-|-(S,diacylglyceryl)Cys-, in which Xaa is hydrophobic (preferably Leu), and Yaa (Ala or Ser) and Zaa (Gly or Ala) have small, neutral side chains.. Its pathway is protein modification; lipoprotein biosynthesis (signal peptide cleavage). Its function is as follows. This protein specifically catalyzes the removal of signal peptides from prolipoproteins. This Chlamydia caviae (strain ATCC VR-813 / DSM 19441 / 03DC25 / GPIC) (Chlamydophila caviae) protein is Lipoprotein signal peptidase.